A 360-amino-acid polypeptide reads, in one-letter code: Photosystem II protein D1 3 (360 aa).

Helical transmembrane passes span 29-46, 118-133, and 142-156; these read YVGW…TATI, HFLL…QWEL, and WICV…AAFA. Histidine 118 contributes to the chlorophyll a binding site. Pheophytin a is bound at residue tyrosine 126. Positions 170 and 189 each coordinate [CaMn4O5] cluster. The chain crosses the membrane as a helical span at residues 197 to 218; the sequence is FHMLGVAGVFGGSLFSAMHGSL. Histidine 198 provides a ligand contact to chlorophyll a. Residues histidine 215 and 264–265 each bind a quinone; that span reads SF. Residue histidine 215 participates in Fe cation binding. Histidine 272 provides a ligand contact to Fe cation. The chain crosses the membrane as a helical span at residues 274–288; it reads FLGAWPVVGIWFTSM. [CaMn4O5] cluster contacts are provided by histidine 332, glutamate 333, aspartate 342, and alanine 344. Residues 345 to 360 constitute a propeptide that is removed on maturation; sequence AGEATPVALTAPSIHG.

Belongs to the reaction center PufL/M/PsbA/D family. In terms of assembly, PSII is composed of 1 copy each of membrane proteins PsbA, PsbB, PsbC, PsbD, PsbE, PsbF, PsbH, PsbI, PsbJ, PsbK, PsbL, PsbM, PsbT, PsbX, PsbY, PsbZ, Psb30/Ycf12, peripheral proteins PsbO, CyanoQ (PsbQ), PsbU, PsbV and a large number of cofactors. It forms dimeric complexes. The D1/D2 heterodimer binds P680, chlorophylls that are the primary electron donor of PSII, and subsequent electron acceptors. It shares a non-heme iron and each subunit binds pheophytin, quinone, additional chlorophylls, carotenoids and lipids. D1 provides most of the ligands for the Mn4-Ca-O5 cluster of the oxygen-evolving complex (OEC). There is also a Cl(-1) ion associated with D1 and D2, which is required for oxygen evolution. The PSII complex binds additional chlorophylls, carotenoids and specific lipids. serves as cofactor. Post-translationally, tyr-161 forms a radical intermediate that is referred to as redox-active TyrZ, YZ or Y-Z. C-terminally processed by CtpA; processing is essential to allow assembly of the oxygen-evolving complex and thus photosynthetic growth.

It localises to the cellular thylakoid membrane. It carries out the reaction 2 a plastoquinone + 4 hnu + 2 H2O = 2 a plastoquinol + O2. In terms of biological role, photosystem II (PSII) is a light-driven water:plastoquinone oxidoreductase that uses light energy to abstract electrons from H(2)O, generating O(2) and a proton gradient subsequently used for ATP formation. It consists of a core antenna complex that captures photons, and an electron transfer chain that converts photonic excitation into a charge separation. The D1/D2 (PsbA/PsbD) reaction center heterodimer binds P680, the primary electron donor of PSII as well as several subsequent electron acceptors. This chain is Photosystem II protein D1 3, found in Synechococcus sp. (strain ATCC 27144 / PCC 6301 / SAUG 1402/1) (Anacystis nidulans).